A 333-amino-acid chain; its full sequence is MAPHWTLRQLRLVALAAASGSYAKAAQDMGLSPPAVTAQMKALEEDIGVPMFERVDGRLRPTAAGQELLSAQERIARALSEAERAIAALKSPERGSVVVGVVSTAKYFAPMALAAFRRRRPEIELRLIIGNREDIIRGIVSLDFDVAIMGRPPPALEAETRLIGDHPHIVVAPVDHPLFKRRKRITPADLTRESLLVREPGSGTRILMERVFEEAGAPNPPIAMEIGSNETIKQSVMAGLGLAFISAHTVAAEVADGRLRVLEVEGLPVVRQWLAVRARDKRLLPAGQALMDFLEREGASFLPQMPGGEGGRCYLPDHVSGSTPAKAVARDPV.

An HTH lysR-type domain is found at 5–62 (WTLRQLRLVALAAASGSYAKAAQDMGLSPPAVTAQMKALEEDIGVPMFERVDGRLRPT). A DNA-binding region (H-T-H motif) is located at residues 22 to 41 (YAKAAQDMGLSPPAVTAQMK).

The protein belongs to the LysR transcriptional regulatory family.

Transcriptional activator for the cbb operon (cbbLSXFP) for RuBisCO and other Calvin cycle genes. Binds specifically to two binding sites in the cbbR-cbbL intergenic region. The protein is HTH-type transcriptional regulator CbbR (cbbR) of Xanthobacter flavus.